A 366-amino-acid chain; its full sequence is Trans-enoyl reductase caaB (366 aa).

An Enoyl reductase (ER) domain is found at Gly19–Val363. Residue Tyr219 participates in NADP(+) binding.

This sequence belongs to the zinc-containing alcohol dehydrogenase family. Monomer.

The protein operates within secondary metabolite biosynthesis. In terms of biological role, trans-enoyl reductase; part of the gene cluster that produces the acyltetronic acid derivatives carlosic acid, agglomerin F and carlosic acid methyl ether. The PKS domains of caaA condenses two malonyl-CoAs into an acetyl starter unit, and form 1,3-diketohexanyl-ACP with the help of the trans-enoyl reductase caaB. Next, the C domain of caaA forms the ester bond between the acyl chain and L-malic acid (derived from the TCA cycle) and accepted by the A domain instead of an amino acid. Finally, the terminal reductase/Dieckmann cyclization (R/DKC) domain cyclizes the intermediate and releases the product as carlosic acid. Decarboxylation of carlosic acid followed by formation of the exocyclic double bond is likely to be catalyzed by the cytochrome P450 monooxygenase caaC. Thus, decarboxylation and oxidation would be coupled (performed by one enzyme) through concomitant abstraction of the hydrogen at C-4. Finally, sequential oxidations of the terminal C-10 methyl group to form carboxylic acid would be catalyzed by the 2-oxoglutarate-dependent dioxygenase caaD, which is required for the biosynthesis of agglomerin F. This is Trans-enoyl reductase caaB from Aspergillus niger (strain ATCC MYA-4892 / CBS 513.88 / FGSC A1513).